The following is a 104-amino-acid chain: MDKSKRLFLKSKRFFRRRLPPIQSGDRIDYKNMSLISRFISEQGKILSRRVNRLTLKQQRLITIAIKQARILSSLPFINNEKKQFEKSELTATRTTTVFKTKKR.

Belongs to the bacterial ribosomal protein bS18 family. Part of the 30S ribosomal subunit.

The protein resides in the plastid. It localises to the chloroplast. This Lotus japonicus (Lotus corniculatus var. japonicus) protein is Small ribosomal subunit protein bS18c.